The primary structure comprises 272 residues: Putative pyruvate, phosphate dikinase regulatory protein 1 (272 aa).

Position 151-158 (151-158) interacts with ADP; it reads GISRTSKT.

It belongs to the pyruvate, phosphate/water dikinase regulatory protein family. PDRP subfamily.

The enzyme catalyses N(tele)-phospho-L-histidyl/L-threonyl-[pyruvate, phosphate dikinase] + ADP = N(tele)-phospho-L-histidyl/O-phospho-L-threonyl-[pyruvate, phosphate dikinase] + AMP + H(+). The catalysed reaction is N(tele)-phospho-L-histidyl/O-phospho-L-threonyl-[pyruvate, phosphate dikinase] + phosphate + H(+) = N(tele)-phospho-L-histidyl/L-threonyl-[pyruvate, phosphate dikinase] + diphosphate. Its function is as follows. Bifunctional serine/threonine kinase and phosphorylase involved in the regulation of the pyruvate, phosphate dikinase (PPDK) by catalyzing its phosphorylation/dephosphorylation. This Staphylococcus epidermidis (strain ATCC 35984 / DSM 28319 / BCRC 17069 / CCUG 31568 / BM 3577 / RP62A) protein is Putative pyruvate, phosphate dikinase regulatory protein 1.